A 189-amino-acid polypeptide reads, in one-letter code: dCTP deaminase (189 aa).

DCTP is bound by residues 112 to 117 (KSTYAR), 136 to 138 (TLE), Gln-157, Tyr-171, and Gln-181. The Proton donor/acceptor role is filled by Glu-138.

This sequence belongs to the dCTP deaminase family. Homotrimer.

It catalyses the reaction dCTP + H2O + H(+) = dUTP + NH4(+). Its pathway is pyrimidine metabolism; dUMP biosynthesis; dUMP from dCTP (dUTP route): step 1/2. Functionally, catalyzes the deamination of dCTP to dUTP. The protein is dCTP deaminase of Nitrosospira multiformis (strain ATCC 25196 / NCIMB 11849 / C 71).